Consider the following 274-residue polypeptide: NAD(P)H dehydrogenase [quinone] 1 (274 aa).

Residue alanine 2 is modified to N-acetylalanine. Residues histidine 12, 18–19 (FN), and glutamine 67 each bind FAD. Phosphoserine is present on serine 82. Residue 104 to 107 (LYWF) coordinates FAD. Residue 126–128 (AYT) participates in substrate binding. FAD-binding positions include 148–151 (TTGG), tyrosine 156, and arginine 201. Residues 225 to 274 (PSSLFDLNFQAGFLLKKEVQEEQKKNKFGLSVGHHLGKSIPADNQIKARK) are important for apoenzyme conformational stability. Lysine 251 participates in a covalent cross-link: Glycyl lysine isopeptide (Lys-Gly) (interchain with G-Cter in SUMO2).

This sequence belongs to the NAD(P)H dehydrogenase (quinone) family. Homodimer. Interacts with PDLIM4 isoform 2; this interaction stabilizes PDLIM4 isoform 2 in response to oxidative stress and protects it from ubiquitin-independent degradation by the core 20S proteasome. Interacts with TP73 (via SAM domain); this interaction is NADH-dependent, stabilizes TP73 in response to oxidative stress and protects it from ubiquitin-independent degradation by the 20S proteasome. Interacts with TP53; this interaction is NADH-dependent, stabilizes TP53 in response to oxidative stress and protects it from ubiquitin-independent degradation by the 20S proteasome. FAD is required as a cofactor.

Its subcellular location is the cytoplasm. It localises to the cytosol. It carries out the reaction a quinone + NADH + H(+) = a quinol + NAD(+). The enzyme catalyses a quinone + NADPH + H(+) = a quinol + NADP(+). The catalysed reaction is ubiquinone-10 + NADH + H(+) = ubiquinol-10 + NAD(+). It catalyses the reaction menadione + NADH + H(+) = menadiol + NAD(+). In terms of biological role, flavin-containing quinone reductase that catalyzes two-electron reduction of quinones to hydroquinones using either NADH or NADPH as electron donors. In a ping-pong kinetic mechanism, the electrons are sequentially transferred from NAD(P)H to flavin cofactor and then from reduced flavin to the quinone, bypassing the formation of semiquinone and reactive oxygen species. Regulates cellular redox state primarily through quinone detoxification. Reduces components of plasma membrane redox system such as coenzyme Q and vitamin quinones, producing antioxidant hydroquinone forms. In the process may function as superoxide scavenger to prevent hydroquinone oxidation and facilitate excretion. Alternatively, can activate quinones and their derivatives by generating redox reactive hydroquinones with DNA cross-linking antitumor potential. Acts as a gatekeeper of the core 20S proteasome known to degrade proteins with unstructured regions. Upon oxidative stress, interacts with tumor suppressors TP53 and TP73 in a NADH-dependent way and inhibits their ubiquitin-independent degradation by the 20S proteasome. This chain is NAD(P)H dehydrogenase [quinone] 1 (Nqo1), found in Rattus norvegicus (Rat).